Here is a 328-residue protein sequence, read N- to C-terminus: tRNA dimethylallyltransferase (328 aa).

25 to 32 (GNTGSGKS) lines the ATP pocket. 27–32 (TGSGKS) is a binding site for substrate. The tract at residues 50 to 53 (DSRQ) is interaction with substrate tRNA.

It belongs to the IPP transferase family. In terms of assembly, monomer. It depends on Mg(2+) as a cofactor.

It catalyses the reaction adenosine(37) in tRNA + dimethylallyl diphosphate = N(6)-dimethylallyladenosine(37) in tRNA + diphosphate. Functionally, catalyzes the transfer of a dimethylallyl group onto the adenine at position 37 in tRNAs that read codons beginning with uridine, leading to the formation of N6-(dimethylallyl)adenosine (i(6)A). The polypeptide is tRNA dimethylallyltransferase (Dehalococcoides mccartyi (strain ATCC BAA-2100 / JCM 16839 / KCTC 5957 / BAV1)).